The sequence spans 416 residues: Serine hydroxymethyltransferase (416 aa).

(6S)-5,6,7,8-tetrahydrofolate contacts are provided by residues leucine 121 and 125–127 (GHL). Lysine 229 carries the post-translational modification N6-(pyridoxal phosphate)lysine.

This sequence belongs to the SHMT family. In terms of assembly, homodimer. It depends on pyridoxal 5'-phosphate as a cofactor.

It is found in the cytoplasm. It catalyses the reaction (6R)-5,10-methylene-5,6,7,8-tetrahydrofolate + glycine + H2O = (6S)-5,6,7,8-tetrahydrofolate + L-serine. The protein operates within one-carbon metabolism; tetrahydrofolate interconversion. Its pathway is amino-acid biosynthesis; glycine biosynthesis; glycine from L-serine: step 1/1. In terms of biological role, catalyzes the reversible interconversion of serine and glycine with tetrahydrofolate (THF) serving as the one-carbon carrier. This reaction serves as the major source of one-carbon groups required for the biosynthesis of purines, thymidylate, methionine, and other important biomolecules. Also exhibits THF-independent aldolase activity toward beta-hydroxyamino acids, producing glycine and aldehydes, via a retro-aldol mechanism. This chain is Serine hydroxymethyltransferase, found in Neisseria meningitidis serogroup C / serotype 2a (strain ATCC 700532 / DSM 15464 / FAM18).